The chain runs to 93 residues: Translation initiation factor IF-1 (93 aa).

The S1-like domain occupies 1–72 (MAKEELIQFE…EKGRLIFRHK (72 aa)). The disordered stretch occupies residues 69–93 (FRHKDERPSGAPRGGPPRGGQFRRR).

It belongs to the IF-1 family. As to quaternary structure, component of the 30S ribosomal translation pre-initiation complex which assembles on the 30S ribosome in the order IF-2 and IF-3, IF-1 and N-formylmethionyl-tRNA(fMet); mRNA recruitment can occur at any time during PIC assembly.

Its subcellular location is the cytoplasm. One of the essential components for the initiation of protein synthesis. Stabilizes the binding of IF-2 and IF-3 on the 30S subunit to which N-formylmethionyl-tRNA(fMet) subsequently binds. Helps modulate mRNA selection, yielding the 30S pre-initiation complex (PIC). Upon addition of the 50S ribosomal subunit IF-1, IF-2 and IF-3 are released leaving the mature 70S translation initiation complex. This chain is Translation initiation factor IF-1, found in Nitrobacter hamburgensis (strain DSM 10229 / NCIMB 13809 / X14).